The chain runs to 231 residues: 5'-methylthioadenosine/S-adenosylhomocysteine nucleosidase (231 aa).

Glutamate 12 acts as the Proton acceptor in catalysis. Substrate is bound by residues glycine 78, methionine 153, and 174–175 (ME). The active-site Proton donor is aspartate 198.

This sequence belongs to the PNP/UDP phosphorylase family. MtnN subfamily.

The catalysed reaction is S-adenosyl-L-homocysteine + H2O = S-(5-deoxy-D-ribos-5-yl)-L-homocysteine + adenine. It catalyses the reaction S-methyl-5'-thioadenosine + H2O = 5-(methylsulfanyl)-D-ribose + adenine. The enzyme catalyses 5'-deoxyadenosine + H2O = 5-deoxy-D-ribose + adenine. Its pathway is amino-acid biosynthesis; L-methionine biosynthesis via salvage pathway; S-methyl-5-thio-alpha-D-ribose 1-phosphate from S-methyl-5'-thioadenosine (hydrolase route): step 1/2. Functionally, catalyzes the irreversible cleavage of the glycosidic bond in both 5'-methylthioadenosine (MTA) and S-adenosylhomocysteine (SAH/AdoHcy) to adenine and the corresponding thioribose, 5'-methylthioribose and S-ribosylhomocysteine, respectively. Also cleaves 5'-deoxyadenosine, a toxic by-product of radical S-adenosylmethionine (SAM) enzymes, into 5-deoxyribose and adenine. In Bacillus pumilus (strain SAFR-032), this protein is 5'-methylthioadenosine/S-adenosylhomocysteine nucleosidase.